Here is a 395-residue protein sequence, read N- to C-terminus: Phosphatidylinositol 4-phosphate 5-kinase-like protein 1 (395 aa).

A disordered region spans residues 1–25; it reads MATPSLRSHEIPAHSQEAGNKSISS. The PIPK domain occupies 37–394; sequence ARQSRVGLFE…RLCRWAEVHT (358 aa).

As to quaternary structure, interacts with type I phosphatidylinositol 4-phosphate 5-kinases, including PIP5K1A and PIP5K1B. As to expression, highly expressed in brain and testis, relatively to heart, spleen, lung, liver, skeletal muscle and kidney.

The protein localises to the cytoplasm. It is found in the membrane. May act as a scaffold to localize and regulate type I phosphatidylinositol 4-phosphate 5-kinases to specific compartments within the cell, where they generate PI(4,5)P2 for actin nucleation, signaling and scaffold protein recruitment and conversion to PI(3,4,5)P3. The protein is Phosphatidylinositol 4-phosphate 5-kinase-like protein 1 (Pip5kl1) of Mus musculus (Mouse).